Reading from the N-terminus, the 248-residue chain is Meiotic drive suppressor wtf1 (248 aa).

Residues 30–68 form a disordered region; that stretch reads LLPEYNSDEESTLPPYSDHARVSNPPNTHRENHSSGTTD. Helical transmembrane passes span 73 to 93, 110 to 130, 152 to 172, and 186 to 206; these read FLIKLLISFTSIILFNAPAVC, WTLIGFWCASSLIIFTFSWYF, IPMAFSEVFLFNILVGSPRVT, and SLADHIIFAILSILVFIVETV.

It belongs to the WTF family. In terms of assembly, homomer. Interacts with other proteins that exhibit high sequence similarity.

It localises to the spore membrane. It is found in the vacuole membrane. In terms of biological role, acts as a suppressor component of the dual wtf meiotic drive system, and can suppress but not confer meiotic drive by compatible poisons. Wtf meiotic drive systems promote unequal transmission of alleles from the parental zygote to progeny spores by encoding a poison and an antidote from the same locus; the poison is trans-acting and forms toxic aggregates in all spores within an ascus, wherease the antidote is spore-specific and targets aggregates for degradation by the vacuole. Meiotic drive by wtf systems therefore lead to poisoning of all progeny that do not inherit the dual poison/antidote allele, or express a compatible antidote. This Schizosaccharomyces pombe (Fission yeast) protein is Meiotic drive suppressor wtf1.